The primary structure comprises 702 residues: Elongation factor G (702 aa).

Residues 9–292 (DRTRNIGIMA…AVVDYLPSPL (284 aa)) form the tr-type G domain. Residues 18–25 (AHIDAGKT), 91–95 (DTPGH), and 145–148 (NKMD) contribute to the GTP site.

The protein belongs to the TRAFAC class translation factor GTPase superfamily. Classic translation factor GTPase family. EF-G/EF-2 subfamily.

It is found in the cytoplasm. Its function is as follows. Catalyzes the GTP-dependent ribosomal translocation step during translation elongation. During this step, the ribosome changes from the pre-translocational (PRE) to the post-translocational (POST) state as the newly formed A-site-bound peptidyl-tRNA and P-site-bound deacylated tRNA move to the P and E sites, respectively. Catalyzes the coordinated movement of the two tRNA molecules, the mRNA and conformational changes in the ribosome. The chain is Elongation factor G from Oenococcus oeni (strain ATCC BAA-331 / PSU-1).